Reading from the N-terminus, the 619-residue chain is Guanylate cyclase soluble subunit beta-1 (619 aa).

H105 provides a ligand contact to heme. The Guanylate cyclase domain occupies 421–554; it reads TILFSGIVGF…NTVNLTSRTE (134 aa).

The protein belongs to the adenylyl cyclase class-4/guanylyl cyclase family. As to quaternary structure, the active enzyme is formed by a heterodimer of an alpha and a beta subunit. Heterodimer with GUCY1A1. Can also form inactive homodimers in vitro. The cofactor is heme. As to expression, lung and brain.

It localises to the cytoplasm. The enzyme catalyses GTP = 3',5'-cyclic GMP + diphosphate. Activated by nitric oxide in the presence of magnesium or manganese ions, binding of NO to the heme iron increases catalytic activity up to 400 folds. In terms of biological role, mediates responses to nitric oxide (NO) by catalyzing the biosynthesis of the signaling molecule cGMP. The sequence is that of Guanylate cyclase soluble subunit beta-1 (GUCY1B1) from Bos taurus (Bovine).